A 581-amino-acid chain; its full sequence is Chaperonin GroEL 1 (581 aa).

ATP is bound by residues 29–32 (TIGP), 86–90 (DGTTT), Gly-413, and Asp-492. The disordered stretch occupies residues 522-541 (PEPEAAGPGGPGADPMGGMG). Residues 528-541 (GPGGPGADPMGGMG) are compositionally biased toward gly residues.

The protein belongs to the chaperonin (HSP60) family. Forms a cylinder of 14 subunits composed of two heptameric rings stacked back-to-back. Interacts with the co-chaperonin GroES.

It localises to the cytoplasm. It carries out the reaction ATP + H2O + a folded polypeptide = ADP + phosphate + an unfolded polypeptide.. Its function is as follows. Together with its co-chaperonin GroES, plays an essential role in assisting protein folding. The GroEL-GroES system forms a nano-cage that allows encapsulation of the non-native substrate proteins and provides a physical environment optimized to promote and accelerate protein folding. This chain is Chaperonin GroEL 1, found in Prochlorococcus marinus (strain MIT 9301).